The sequence spans 261 residues: tRNA pseudouridine synthase A (261 aa).

D52 serves as the catalytic Nucleophile. Y110 is a binding site for substrate.

It belongs to the tRNA pseudouridine synthase TruA family. In terms of assembly, homodimer.

The enzyme catalyses uridine(38/39/40) in tRNA = pseudouridine(38/39/40) in tRNA. Its function is as follows. Formation of pseudouridine at positions 38, 39 and 40 in the anticodon stem and loop of transfer RNAs. This chain is tRNA pseudouridine synthase A, found in Blochmanniella pennsylvanica (strain BPEN).